Here is a 207-residue protein sequence, read N- to C-terminus: Basic helix-loop-helix transcription factor scleraxis (207 aa).

Disordered regions lie at residues 1–91 and 151–183; these read MSFA…RDRT and AFFH…QPKQ. The segment covering 73-91 has biased composition (basic and acidic residues); it reads PGREPRQRHTANARERDRT. Residues 78–130 enclose the bHLH domain; that stretch reads RQRHTANARERDRTNSVNTAFTALRTLIPTEPADRKLSKIETLRLASSYISHL. Residues 161 to 171 are compositionally biased toward pro residues; that stretch reads PLPPPPPPPPL.

Efficient DNA binding requires dimerization with another bHLH protein. Dimerizes and binds the E-box consensus sequence with E12. As to expression, expressed in mesenchymal precursors of cartilage and in connective tissue. Highly expressed in tendons in the limb, tongue and diaphragm and in cartilage of the bronchi.

It is found in the nucleus. Plays an early essential role in mesoderm formation, as well as a later role in formation of somite-derived chondrogenic lineages. The polypeptide is Basic helix-loop-helix transcription factor scleraxis (Scx) (Mus musculus (Mouse)).